A 91-amino-acid polypeptide reads, in one-letter code: Class I hydrophobin E (91 aa).

An N-terminal signal peptide occupies residues M1 to A16. 4 disulfides stabilise this stretch: C30-C72, C42-C64, C43-C55, and C73-C89. N83 is a glycosylation site (N-linked (GlcNAc...) asparagine).

This sequence belongs to the fungal hydrophobin family.

The protein localises to the secreted. It localises to the cell wall. It is found in the vacuole. Its subcellular location is the cytoplasmic vesicle. Functionally, aerial growth, conidiation, and dispersal of filamentous fungi in the environment rely upon a capability of their secreting small amphipathic proteins called hydrophobins (HPBs) with low sequence identity. Class I can self-assemble into an outermost layer of rodlet bundles on aerial cell surfaces, conferring cellular hydrophobicity that supports fungal growth, development and dispersal; whereas Class II form highly ordered films at water-air interfaces through intermolecular interactions but contribute nothing to the rodlet structure. Hyd1E contributes to certain cell wall-related features, such as hydrophobicity but is not involved in cell wall-related events during fungal proliferation in host hemocoel. Does not contribute to conidial hydrophobicity. The protein is Class I hydrophobin E of Beauveria bassiana (strain ARSEF 2860) (White muscardine disease fungus).